Consider the following 277-residue polypeptide: Large ribosomal subunit protein uL2 (277 aa).

The segment at 222 to 277 (GVAMNPVDHPHGGGEGRTSGGRHPVTPWGKPTKGKKTRSNKATDKFIMRSRHQRKK) is disordered.

The protein belongs to the universal ribosomal protein uL2 family. Part of the 50S ribosomal subunit. Forms a bridge to the 30S subunit in the 70S ribosome.

Its function is as follows. One of the primary rRNA binding proteins. Required for association of the 30S and 50S subunits to form the 70S ribosome, for tRNA binding and peptide bond formation. It has been suggested to have peptidyltransferase activity; this is somewhat controversial. Makes several contacts with the 16S rRNA in the 70S ribosome. The chain is Large ribosomal subunit protein uL2 from Brucella abortus (strain S19).